We begin with the raw amino-acid sequence, 445 residues long: Glutamate--tRNA ligase 1 (445 aa).

Positions 8–18 (PSPTGKLHVGN) match the 'HIGH' region motif. Residues 239 to 243 (KLSKR) carry the 'KMSKS' region motif. Lysine 242 serves as a coordination point for ATP.

Belongs to the class-I aminoacyl-tRNA synthetase family. Glutamate--tRNA ligase type 1 subfamily. In terms of assembly, monomer.

The protein resides in the cytoplasm. It carries out the reaction tRNA(Glu) + L-glutamate + ATP = L-glutamyl-tRNA(Glu) + AMP + diphosphate. In terms of biological role, catalyzes the attachment of glutamate to tRNA(Glu) in a two-step reaction: glutamate is first activated by ATP to form Glu-AMP and then transferred to the acceptor end of tRNA(Glu). The protein is Glutamate--tRNA ligase 1 of Maricaulis maris (strain MCS10) (Caulobacter maris).